Reading from the N-terminus, the 350-residue chain is Divinyl chlorophyll a/b light-harvesting protein PcbB (350 aa).

Helical transmembrane passes span 27–47, 89–109, 141–161, 202–222, 244–264, and 305–325; these read FLAA…SFTL, IVVT…GGLM, FILG…VEWA, VMGG…WHIV, LSWA…WCAS, and LTNI…WHAL.

This sequence belongs to the PsbB/PsbC family. IsiA/Pcb subfamily. The antenna complex consists of divinyl chlorophylls (a and b) and divinyl chlorophyll a/b binding proteins. Under iron-starvation forms a complex with PSI, consisting of a PSI trimer surrounded by a ring composed of 18 PcbB subunits. It depends on divinyl chlorophyll a as a cofactor. Requires divinyl chlorophyll b as cofactor.

The protein resides in the cellular thylakoid membrane. Its function is as follows. The antenna complex functions as a light receptor, it captures and delivers excitation energy to photosystems I. The Prochlorales pcb genes are not related to higher plant LHCs. This is Divinyl chlorophyll a/b light-harvesting protein PcbB (pcbB) from Prochlorococcus marinus (strain MIT 9313).